The primary structure comprises 317 residues: Lipoyl synthase (317 aa).

Positions 1–28 are disordered; it reads MDSQPQSKKAARGADKTARNPIPIIPAP. Positions 64, 69, 75, 90, 94, 97, and 304 each coordinate [4Fe-4S] cluster. Positions 76–293 constitute a Radical SAM core domain; the sequence is FGGGTATFMI…QRDGMAMGFR (218 aa).

It belongs to the radical SAM superfamily. Lipoyl synthase family. It depends on [4Fe-4S] cluster as a cofactor.

The protein localises to the cytoplasm. The catalysed reaction is [[Fe-S] cluster scaffold protein carrying a second [4Fe-4S](2+) cluster] + N(6)-octanoyl-L-lysyl-[protein] + 2 oxidized [2Fe-2S]-[ferredoxin] + 2 S-adenosyl-L-methionine + 4 H(+) = [[Fe-S] cluster scaffold protein] + N(6)-[(R)-dihydrolipoyl]-L-lysyl-[protein] + 4 Fe(3+) + 2 hydrogen sulfide + 2 5'-deoxyadenosine + 2 L-methionine + 2 reduced [2Fe-2S]-[ferredoxin]. It functions in the pathway protein modification; protein lipoylation via endogenous pathway; protein N(6)-(lipoyl)lysine from octanoyl-[acyl-carrier-protein]: step 2/2. In terms of biological role, catalyzes the radical-mediated insertion of two sulfur atoms into the C-6 and C-8 positions of the octanoyl moiety bound to the lipoyl domains of lipoate-dependent enzymes, thereby converting the octanoylated domains into lipoylated derivatives. The polypeptide is Lipoyl synthase (Acidithiobacillus ferrooxidans (strain ATCC 23270 / DSM 14882 / CIP 104768 / NCIMB 8455) (Ferrobacillus ferrooxidans (strain ATCC 23270))).